The chain runs to 230 residues: MCGNNMSTPLPAIVPAARKATAAVIFLHGLGDTGHGWAEAFAGIRSSHIKYICPHAPVRPVTLNMNMAMPSWFDIIGLSPDSQEDESGIKQAAENIKALIDQEVKNGIPSNRIILGGFSQGGALSLYTALTTQQKLAGVTALSCWLPLRASFPQGPIGGANRDISILQCHGDCDPLVPLMFGSLTVEKLKTLVNPANVTFKTYEGMMHSSCQQEMMDVKQFIDKLLPPID.

Active-site charge relay system residues include Ser119, Asp174, and His208. Lys224 is subject to N6-acetyllysine.

This sequence belongs to the AB hydrolase superfamily. AB hydrolase 2 family. In terms of assembly, homodimer.

The protein localises to the cytoplasm. The protein resides in the cell membrane. It is found in the nucleus membrane. It localises to the endoplasmic reticulum. The catalysed reaction is S-hexadecanoyl-L-cysteinyl-[protein] + H2O = L-cysteinyl-[protein] + hexadecanoate + H(+). The enzyme catalyses 1-hexadecanoyl-sn-glycero-3-phosphocholine + H2O = sn-glycerol 3-phosphocholine + hexadecanoate + H(+). It carries out the reaction a 1-(9Z-octadecenoyl)-2-acyl-sn-glycero-3-phosphocholine + H2O = a 2-acyl-sn-glycero-3-phosphocholine + (9Z)-octadecenoate + H(+). Acts as an acyl-protein thioesterase. Hydrolyzes fatty acids from S-acylated cysteine residues in proteins such as trimeric G alpha proteins or HRAS. Acts as a palmitoyl thioesterase that catalyzes depalmitoylation of proteins, such as ADRB2, KCNMA1 and SQSTM1. Acts as a negative regulator of autophagy by mediating palmitoylation of SQSTM1, decreasing affinity between SQSTM1 and ATG8 proteins and recruitment of ubiquitinated cargo proteins to autophagosomes. Acts as a lysophospholipase and hydrolyzes lysophosphatidylcholine (lyso-PC). Also hydrolyzes lysophosphatidylethanolamine (lyso-PE), lysophosphatidylinositol (lyso-PI) and lysophosphatidylserine (lyso-PS). Has much higher thioesterase activity than lysophospholipase activity. Contributes to the production of lysophosphatidic acid (LPA) during blood coagulation by recognizing and cleaving plasma phospholipids to generate lysophospholipids which in turn act as substrates for ENPP2 to produce LPA. This chain is Acyl-protein thioesterase 1 (LYPLA1), found in Pongo abelii (Sumatran orangutan).